The primary structure comprises 528 residues: tRNA-2-methylthio-N(6)-dimethylallyladenosine synthase (528 aa).

In terms of domain architecture, MTTase N-terminal spans 19–134 (RTYEVRTYGC…LPTLLERARH (116 aa)). Residues C28, C63, C97, C171, C175, and C178 each coordinate [4Fe-4S] cluster. The region spanning 157–387 (RDEIASGWVS…TALQERISHE (231 aa)) is the Radical SAM core domain. A TRAM domain is found at 390–460 (QRVVGRTVEV…PFHLIADSVD (71 aa)).

The protein belongs to the methylthiotransferase family. MiaB subfamily. As to quaternary structure, monomer. Requires [4Fe-4S] cluster as cofactor.

It localises to the cytoplasm. The enzyme catalyses N(6)-dimethylallyladenosine(37) in tRNA + (sulfur carrier)-SH + AH2 + 2 S-adenosyl-L-methionine = 2-methylsulfanyl-N(6)-dimethylallyladenosine(37) in tRNA + (sulfur carrier)-H + 5'-deoxyadenosine + L-methionine + A + S-adenosyl-L-homocysteine + 2 H(+). In terms of biological role, catalyzes the methylthiolation of N6-(dimethylallyl)adenosine (i(6)A), leading to the formation of 2-methylthio-N6-(dimethylallyl)adenosine (ms(2)i(6)A) at position 37 in tRNAs that read codons beginning with uridine. The chain is tRNA-2-methylthio-N(6)-dimethylallyladenosine synthase from Clavibacter michiganensis subsp. michiganensis (strain NCPPB 382).